The sequence spans 1887 residues: Nuclear pore membrane glycoprotein 210 (1887 aa).

The signal sequence occupies residues 1–26 (MAARGRGLLLLTLSVLLAAGPSAAAA). Residues 27-1808 (KLNIPKVLLP…LFQHFLDSYQ (1782 aa)) lie on the Perinuclear space side of the membrane. 12 N-linked (GlcNAc...) asparagine glycosylation sites follow: Asn44, Asn337, Asn405, Asn484, Asn681, Asn801, Asn926, Asn1039, Asn1116, Asn1135, Asn1362, and Asn1441. Positions 1078 to 1151 (FPPFRLMPRK…VQAVDAETGK (74 aa)) constitute a BIG2 domain. The chain crosses the membrane as a helical span at residues 1809–1829 (VMFFTLFALLAGTAVMIIAYH). The Cytoplasmic portion of the chain corresponds to 1830–1887 (TVCTPRDLAVPAALTPRASPGHSPHYFAASSPTSPNALPPARKASPPSGLWSPAYASH). Position 1844 is a phosphothreonine (Thr1844). The tract at residues 1853 to 1887 (PHYFAASSPTSPNALPPARKASPPSGLWSPAYASH) is disordered. Ser1874, Ser1877, Ser1881, and Ser1886 each carry phosphoserine.

This sequence belongs to the NUP210 family. Forms dimers and possibly higher-order oligomers. In terms of processing, N-glycosylated, but not all potential glycosylation sites may be used. Contains high-mannose type oligosaccharides. Phosphorylated at Ser-1881 in mitosis specifically; not phosphorylated in interphase. Ubiquitous expression, with highest levels in lung, liver, pancreas, testis, and ovary, intermediate levels in brain, kidney, and spleen, and lowest levels in heart and skeletal muscle.

Its subcellular location is the nucleus. It is found in the nuclear pore complex. The protein resides in the nucleus membrane. The protein localises to the endoplasmic reticulum membrane. Functionally, nucleoporin essential for nuclear pore assembly and fusion, nuclear pore spacing, as well as structural integrity. In Homo sapiens (Human), this protein is Nuclear pore membrane glycoprotein 210 (NUP210).